The primary structure comprises 322 residues: 2-oxoglutarate-dependent dioxygenase caaD (322 aa).

The Fe2OG dioxygenase domain maps to Thr172 to Asp279. 3 residues coordinate Fe cation: His200, Asp202, and His259. Arg269 provides a ligand contact to 2-oxoglutarate.

It belongs to the iron/ascorbate-dependent oxidoreductase family. Fe(2+) serves as cofactor.

Its pathway is secondary metabolite biosynthesis. 2-oxoglutarate-dependent dioxygenase; part of the gene cluster that produces the acyltetronic acid derivatives carlosic acid, agglomerin F and carlosic acid methyl ether. CaaD catalyzes the sequential oxidations of the terminal C-10 methyl group of the caaC product to form carboxylic acid which is necessary for the biosynthesis of agglomerin F. This chain is 2-oxoglutarate-dependent dioxygenase caaD, found in Aspergillus niger (strain ATCC MYA-4892 / CBS 513.88 / FGSC A1513).